We begin with the raw amino-acid sequence, 321 residues long: Beta-ketoacyl-[acyl-carrier-protein] synthase III (321 aa).

Residues cysteine 116 and histidine 248 contribute to the active site. Residues 249–253 (QANLR) are ACP-binding. Residue asparagine 278 is part of the active site.

It belongs to the thiolase-like superfamily. FabH family. In terms of assembly, homodimer.

The protein resides in the cytoplasm. It catalyses the reaction malonyl-[ACP] + acetyl-CoA + H(+) = 3-oxobutanoyl-[ACP] + CO2 + CoA. The protein operates within lipid metabolism; fatty acid biosynthesis. In terms of biological role, catalyzes the condensation reaction of fatty acid synthesis by the addition to an acyl acceptor of two carbons from malonyl-ACP. Catalyzes the first condensation reaction which initiates fatty acid synthesis and may therefore play a role in governing the total rate of fatty acid production. Possesses both acetoacetyl-ACP synthase and acetyl transacylase activities. Its substrate specificity determines the biosynthesis of branched-chain and/or straight-chain of fatty acids. This is Beta-ketoacyl-[acyl-carrier-protein] synthase III from Yersinia enterocolitica serotype O:8 / biotype 1B (strain NCTC 13174 / 8081).